Consider the following 1059-residue polypeptide: Carbamoyl phosphate synthase large chain (1059 aa).

The segment at 1–401 (MPKRSDIKKI…SLLKACRSLE (401 aa)) is carboxyphosphate synthetic domain. Residues R129, R169, G175, G176, R208, I210, E215, G241, I242, H243, Q284, and E298 each coordinate ATP. Residues 133-327 (KQLMEELEQP…IAKLAAKIAV (195 aa)) form the ATP-grasp 1 domain. Mg(2+)-binding residues include Q284, E298, and N300. Mn(2+) contacts are provided by Q284, E298, and N300. An oligomerization domain region spans residues 402 to 546 (IGVYHNEMSE…YSTYEWENES (145 aa)). The interval 547-929 (IKSDKESVIV…ALYKAFEASY (383 aa)) is carbamoyl phosphate synthetic domain. One can recognise an ATP-grasp 2 domain in the interval 671 to 861 (EQALKDLDIP…MAQVATNLIL (191 aa)). ATP is bound by residues R707, S746, I748, E752, G777, V778, H779, S780, Q820, and E832. Mg(2+)-binding residues include Q820, E832, and N834. Residues Q820, E832, and N834 each coordinate Mn(2+). Residues 930–1059 (LHLPTFGNVI…ESRSFTTEAI (130 aa)) enclose the MGS-like domain. Positions 930–1059 (LHLPTFGNVI…ESRSFTTEAI (130 aa)) are allosteric domain.

Belongs to the CarB family. In terms of assembly, composed of two chains; the small (or glutamine) chain promotes the hydrolysis of glutamine to ammonia, which is used by the large (or ammonia) chain to synthesize carbamoyl phosphate. Tetramer of heterodimers (alpha,beta)4. Mg(2+) is required as a cofactor. Mn(2+) serves as cofactor.

It catalyses the reaction hydrogencarbonate + L-glutamine + 2 ATP + H2O = carbamoyl phosphate + L-glutamate + 2 ADP + phosphate + 2 H(+). It carries out the reaction hydrogencarbonate + NH4(+) + 2 ATP = carbamoyl phosphate + 2 ADP + phosphate + 2 H(+). Its pathway is amino-acid biosynthesis; L-arginine biosynthesis; carbamoyl phosphate from bicarbonate: step 1/1. It participates in pyrimidine metabolism; UMP biosynthesis via de novo pathway; (S)-dihydroorotate from bicarbonate: step 1/3. In terms of biological role, large subunit of the glutamine-dependent carbamoyl phosphate synthetase (CPSase). CPSase catalyzes the formation of carbamoyl phosphate from the ammonia moiety of glutamine, carbonate, and phosphate donated by ATP, constituting the first step of 2 biosynthetic pathways, one leading to arginine and/or urea and the other to pyrimidine nucleotides. The large subunit (synthetase) binds the substrates ammonia (free or transferred from glutamine from the small subunit), hydrogencarbonate and ATP and carries out an ATP-coupled ligase reaction, activating hydrogencarbonate by forming carboxy phosphate which reacts with ammonia to form carbamoyl phosphate. This chain is Carbamoyl phosphate synthase large chain, found in Streptococcus thermophilus (strain ATCC BAA-250 / LMG 18311).